The sequence spans 526 residues: Peptide chain release factor 3 (526 aa).

Positions 9–277 constitute a tr-type G domain; the sequence is DLRRTFAIIS…GLTKWAPKPL (269 aa). Residues 18-25, 86-90, and 140-143 each bind GTP; these read SHPDAGKT, DTPGH, and NKMD.

It belongs to the TRAFAC class translation factor GTPase superfamily. Classic translation factor GTPase family. PrfC subfamily.

The protein localises to the cytoplasm. Increases the formation of ribosomal termination complexes and stimulates activities of RF-1 and RF-2. It binds guanine nucleotides and has strong preference for UGA stop codons. It may interact directly with the ribosome. The stimulation of RF-1 and RF-2 is significantly reduced by GTP and GDP, but not by GMP. This chain is Peptide chain release factor 3, found in Colwellia psychrerythraea (strain 34H / ATCC BAA-681) (Vibrio psychroerythus).